The chain runs to 128 residues: Glycine cleavage system H protein (128 aa).

Positions 23-105 constitute a Lipoyl-binding domain; that stretch reads IGIVGITWFA…YGEGWILKLE (83 aa). Position 64 is an N6-lipoyllysine (Lys-64).

This sequence belongs to the GcvH family. In terms of assembly, the glycine cleavage system is composed of four proteins: P, T, L and H. Requires (R)-lipoate as cofactor.

In terms of biological role, the glycine cleavage system catalyzes the degradation of glycine. The H protein shuttles the methylamine group of glycine from the P protein to the T protein. This Symbiobacterium thermophilum (strain DSM 24528 / JCM 14929 / IAM 14863 / T) protein is Glycine cleavage system H protein.